A 544-amino-acid polypeptide reads, in one-letter code: Membrane protein insertase YidC (544 aa).

5 helical membrane passes run 6-26 (NLLL…WETD), 343-363 (KFLH…TFIV), 418-438 (LGGC…YYML), 456-476 (LSAQ…MFFI), and 497-517 (PVIF…YYIV).

This sequence belongs to the OXA1/ALB3/YidC family. Type 1 subfamily. Interacts with the Sec translocase complex via SecD. Specifically interacts with transmembrane segments of nascent integral membrane proteins during membrane integration.

The protein resides in the cell inner membrane. Required for the insertion and/or proper folding and/or complex formation of integral membrane proteins into the membrane. Involved in integration of membrane proteins that insert both dependently and independently of the Sec translocase complex, as well as at least some lipoproteins. Aids folding of multispanning membrane proteins. The protein is Membrane protein insertase YidC of Pectobacterium atrosepticum (strain SCRI 1043 / ATCC BAA-672) (Erwinia carotovora subsp. atroseptica).